Reading from the N-terminus, the 163-residue chain is Ribosome maturation factor RimM (163 aa).

Positions 90-161 constitute a PRC barrel domain; it reads EGRHYWGDLE…VVVDPPEGLL (72 aa).

It belongs to the RimM family. In terms of assembly, binds ribosomal protein uS19.

It localises to the cytoplasm. Functionally, an accessory protein needed during the final step in the assembly of 30S ribosomal subunit, possibly for assembly of the head region. Essential for efficient processing of 16S rRNA. May be needed both before and after RbfA during the maturation of 16S rRNA. It has affinity for free ribosomal 30S subunits but not for 70S ribosomes. This is Ribosome maturation factor RimM from Anaeromyxobacter dehalogenans (strain 2CP-C).